Consider the following 509-residue polypeptide: Dihydrolipoyl dehydrogenase, mitochondrial (509 aa).

A mitochondrion-targeting transit peptide spans 1 to 35 (MQSWSRVYCSLAKKGHFNRLSHGLQGASSVPLRTY). Lys-66 bears the N6-acetyllysine; alternate mark. The residue at position 66 (Lys-66) is an N6-succinyllysine; alternate. FAD is bound by residues 71–80 (EKNETLGGTC) and Lys-89. An intrachain disulfide couples Cys-80 to Cys-85. N6-acetyllysine; alternate occurs at positions 104, 122, 132, and 143. N6-succinyllysine; alternate is present on residues Lys-104, Lys-122, Lys-132, and Lys-143. Gly-154 serves as a coordination point for FAD. At Lys-159 the chain carries N6-succinyllysine. 183–185 (TGS) is a binding site for FAD. NAD(+) is bound by residues 220–227 (GAGVIGVE) and Glu-243. 2 positions are modified to N6-succinyllysine: Lys-273 and Lys-277. Val-278 is a binding site for NAD(+). Phosphoserine occurs at positions 285 and 297. Gly-314 contacts NAD(+). N6-acetyllysine is present on Lys-346. FAD contacts are provided by residues Asp-355 and 361 to 364 (MLAH). Lys-410 bears the N6-acetyllysine; alternate mark. At Lys-410 the chain carries N6-succinyllysine; alternate. N6-acetyllysine is present on residues Lys-417 and Lys-420. Lys-430 carries the N6-succinyllysine modification. The active-site Proton acceptor is His-487. Ser-502 carries the phosphoserine modification. Lys-505 carries the post-translational modification N6-acetyllysine; alternate. At Lys-505 the chain carries N6-succinyllysine; alternate.

The protein belongs to the class-I pyridine nucleotide-disulfide oxidoreductase family. As to quaternary structure, homodimer. Part of the multimeric pyruvate dehydrogenase complex that contains multiple copies of pyruvate dehydrogenase (subunits PDHA (PDHA1 or PDHA2) and PDHB, E1), dihydrolipoamide acetyltransferase (DLAT, E2) and lipoamide dehydrogenase (DLD, E3). These subunits are bound to an inner core composed of about 48 DLAT and 12 PDHX molecules (by non covalent bonds). The 2-oxoglutarate dehydrogenase complex is composed of OGDH (2-oxoglutarate dehydrogenase; E1), DLST (dihydrolipoamide succinyltransferase; E2), DLD (dihydrolipoamide dehydrogenase; E3) and the assembly factor KGD4. It contains multiple copies of the three enzymatic components (E1, E2 and E3). In the nucleus, the 2-oxoglutarate dehydrogenase complex associates with KAT2A. Interacts with PDHX. The cofactor is FAD. In terms of processing, tyrosine phosphorylated.

The protein resides in the mitochondrion matrix. Its subcellular location is the nucleus. It localises to the cell projection. It is found in the cilium. The protein localises to the flagellum. The protein resides in the cytoplasmic vesicle. Its subcellular location is the secretory vesicle. It localises to the acrosome. The catalysed reaction is N(6)-[(R)-dihydrolipoyl]-L-lysyl-[protein] + NAD(+) = N(6)-[(R)-lipoyl]-L-lysyl-[protein] + NADH + H(+). In terms of biological role, lipoamide dehydrogenase is a component of the glycine cleavage system as well as an E3 component of three alpha-ketoacid dehydrogenase complexes (pyruvate-, alpha-ketoglutarate-, and branched-chain amino acid-dehydrogenase complex). The 2-oxoglutarate dehydrogenase complex is mainly active in the mitochondrion. A fraction of the 2-oxoglutarate dehydrogenase complex also localizes in the nucleus and is required for lysine succinylation of histones: associates with KAT2A on chromatin and provides succinyl-CoA to histone succinyltransferase KAT2A. In monomeric form may have additional moonlighting function as serine protease. Involved in the hyperactivation of spermatazoa during capacitation and in the spermatazoal acrosome reaction. The polypeptide is Dihydrolipoyl dehydrogenase, mitochondrial (Dld) (Rattus norvegicus (Rat)).